Reading from the N-terminus, the 92-residue chain is Small ribosomal subunit protein uS19 (92 aa).

This sequence belongs to the universal ribosomal protein uS19 family.

Protein S19 forms a complex with S13 that binds strongly to the 16S ribosomal RNA. This is Small ribosomal subunit protein uS19 from Brucella ovis (strain ATCC 25840 / 63/290 / NCTC 10512).